The following is a 111-amino-acid chain: Ig kappa chain V-III region PC 2413 (111 aa).

Residues 1–23 (DIVLTQSPASLAVSLGQRATISC) form a framework-1 region. Cys23 and Cys92 form a disulfide bridge. The interval 24 to 38 (RASESVVNYGVSLMH) is complementarity-determining-1. Residues 39-53 (WFQQKPGQPPKLLIY) are framework-2. The tract at residues 54–60 (GASNRGS) is complementarity-determining-2. Residues 61–92 (GVPARFSGSGSGTDFSLIIHPMEEDDSAMYFC) form a framework-3 region. A complementarity-determining-3 region spans residues 93 to 101 (HQTKEVPWT). The interval 102–111 (FGGGTDLEIE) is framework-4.

The chain is Ig kappa chain V-III region PC 2413 from Mus musculus (Mouse).